A 58-amino-acid chain; its full sequence is Ribulose bisphosphate carboxylase large chain (58 aa).

Residues 1 to 2 (MS) constitute a propeptide that is removed on maturation. At P3 the chain carries N-acetylproline. K14 bears the N6,N6,N6-trimethyllysine mark.

The protein belongs to the RuBisCO large chain family. Type I subfamily. As to quaternary structure, heterohexadecamer of 8 large chains and 8 small chains.

The protein localises to the plastid. The protein resides in the chloroplast. It catalyses the reaction 2 (2R)-3-phosphoglycerate + 2 H(+) = D-ribulose 1,5-bisphosphate + CO2 + H2O. The catalysed reaction is D-ribulose 1,5-bisphosphate + O2 = 2-phosphoglycolate + (2R)-3-phosphoglycerate + 2 H(+). Functionally, ruBisCO catalyzes two reactions: the carboxylation of D-ribulose 1,5-bisphosphate, the primary event in carbon dioxide fixation, as well as the oxidative fragmentation of the pentose substrate in the photorespiration process. Both reactions occur simultaneously and in competition at the same active site. The sequence is that of Ribulose bisphosphate carboxylase large chain (rbcL) from Rosa damascena (Damask rose).